The following is a 259-amino-acid chain: 4-hydroxy-tetrahydrodipicolinate reductase (259 aa).

Residues 8 to 13, 93 to 95, and 119 to 122 contribute to the NAD(+) site; these read GFKGRM, GTT, and APNF. His-149 functions as the Proton donor/acceptor in the catalytic mechanism. His-150 is a binding site for (S)-2,3,4,5-tetrahydrodipicolinate. The active-site Proton donor is Lys-153. A (S)-2,3,4,5-tetrahydrodipicolinate-binding site is contributed by 159–160; that stretch reads GT.

Belongs to the DapB family.

The protein resides in the cytoplasm. It carries out the reaction (S)-2,3,4,5-tetrahydrodipicolinate + NAD(+) + H2O = (2S,4S)-4-hydroxy-2,3,4,5-tetrahydrodipicolinate + NADH + H(+). The catalysed reaction is (S)-2,3,4,5-tetrahydrodipicolinate + NADP(+) + H2O = (2S,4S)-4-hydroxy-2,3,4,5-tetrahydrodipicolinate + NADPH + H(+). It functions in the pathway amino-acid biosynthesis; L-lysine biosynthesis via DAP pathway; (S)-tetrahydrodipicolinate from L-aspartate: step 4/4. In terms of biological role, catalyzes the conversion of 4-hydroxy-tetrahydrodipicolinate (HTPA) to tetrahydrodipicolinate. The protein is 4-hydroxy-tetrahydrodipicolinate reductase of Enterococcus faecalis (strain ATCC 700802 / V583).